We begin with the raw amino-acid sequence, 341 residues long: L-threonine 3-dehydrogenase (341 aa).

C38 contributes to the Zn(2+) binding site. Catalysis depends on charge relay system residues T40 and H43. Zn(2+) contacts are provided by H63, E64, C93, C96, C99, and C107. NAD(+) contacts are provided by residues I175, D195, R200, 262-264 (LGI), and 286-287 (IY).

This sequence belongs to the zinc-containing alcohol dehydrogenase family. As to quaternary structure, homotetramer. Zn(2+) is required as a cofactor.

It localises to the cytoplasm. It catalyses the reaction L-threonine + NAD(+) = (2S)-2-amino-3-oxobutanoate + NADH + H(+). The protein operates within amino-acid degradation; L-threonine degradation via oxydo-reductase pathway; glycine from L-threonine: step 1/2. Catalyzes the NAD(+)-dependent oxidation of L-threonine to 2-amino-3-ketobutyrate. The polypeptide is L-threonine 3-dehydrogenase (Solibacter usitatus (strain Ellin6076)).